Consider the following 386-residue polypeptide: Phosphoglycerate kinase (386 aa).

Residues 21–23, Arg-36, 59–62, Arg-113, and Arg-146 contribute to the substrate site; these read DLN and HLGR. ATP contacts are provided by residues Lys-197, Glu-314, and 340-343; that span reads GGDT.

Belongs to the phosphoglycerate kinase family. As to quaternary structure, monomer.

The protein resides in the cytoplasm. The enzyme catalyses (2R)-3-phosphoglycerate + ATP = (2R)-3-phospho-glyceroyl phosphate + ADP. It functions in the pathway carbohydrate degradation; glycolysis; pyruvate from D-glyceraldehyde 3-phosphate: step 2/5. The protein is Phosphoglycerate kinase of Vibrio vulnificus (strain CMCP6).